A 449-amino-acid polypeptide reads, in one-letter code: Putative F-box/LRR-repeat protein At3g44090 (449 aa).

The F-box domain maps to 23–77 (LASMDCLPDDLLVQILYFLPTKEAISTSLLSKRWRTLYSLVHNLDLDDYIFWHHE). LRR repeat units follow at residues 133-163 (YYNL…SLGT), 186-212 (YIWF…TIHH), 214-231 (FRPF…SVTI), 247-278 (TPNV…ELDL), 286-311 (RQVQ…HLTY), and 320-345 (SKKR…VLSG).

The chain is Putative F-box/LRR-repeat protein At3g44090 from Arabidopsis thaliana (Mouse-ear cress).